Reading from the N-terminus, the 345-residue chain is Very-long-chain 3-oxoacyl-CoA reductase (345 aa).

A helical membrane pass occupies residues 26–46 (GAAVLLTTGTLFIASRVLTFV). Val-71, Asp-125, Asp-133, Asn-152, Tyr-219, Lys-223, Ile-252, and Ser-254 together coordinate NADP(+). Residue Tyr-219 is the Proton donor of the active site. Residue Lys-223 is the Lowers pKa of active site Tyr of the active site.

Belongs to the short-chain dehydrogenases/reductases (SDR) family.

It is found in the endoplasmic reticulum membrane. It carries out the reaction a very-long-chain (3R)-3-hydroxyacyl-CoA + NADP(+) = a very-long-chain 3-oxoacyl-CoA + NADPH + H(+). The protein operates within lipid metabolism; fatty acid biosynthesis. Its function is as follows. Component of the microsomal membrane bound fatty acid elongation system, which produces the 26-carbon very long-chain fatty acids (VLCFA) from palmitate. Catalyzes the reduction of the 3-ketoacyl-CoA intermediate that is formed in each cycle of fatty acid elongation. VLCFAs serve as precursors for ceramide and sphingolipids. This Aspergillus fumigatus (strain CBS 144.89 / FGSC A1163 / CEA10) (Neosartorya fumigata) protein is Very-long-chain 3-oxoacyl-CoA reductase.